Consider the following 314-residue polypeptide: MKITSRKVVVIGTGFVGTSIAYSMINQGLVNELVLIDVNQDKAEGEALDLLDGVSWGQENVIVRAGDYKDCKNADIVVVTAGVNQKPGQSRLDLVNTNAKIMRSIVTQVMDSGFDGIFVIASNPVDILTYVAWETSGLDQSRIVGTGTTLDTTRFRKELATKLEIDPRSVHGYIIGEHGDSEVAVWSHTTVGGKPILEFIVKNKKIGVEDLSNLSNKVKNAAYEIIDKKQATYYGIGMSTARIVKAILNNEQAILPVSAYLRGEYGQEGVFTGVPSIVNQNGVREIIELNIDAYEKKQFEKSVSQLKEVIESIK.

NAD(+) is bound by residues Val16, Asp37, Lys42, Tyr68, and 82–83 (GV). Substrate-binding residues include Gln85 and Arg91. NAD(+)-binding positions include Ser104, 121–123 (ASN), and Thr146. Residue 123 to 126 (NPVD) coordinates substrate. A substrate-binding site is contributed by 151 to 154 (DTTR). Positions 156 and 171 each coordinate beta-D-fructose 1,6-bisphosphate. Residue His178 is the Proton acceptor of the active site. The residue at position 223 (Tyr223) is a Phosphotyrosine. Thr232 contributes to the substrate binding site.

Belongs to the LDH/MDH superfamily. LDH family. In terms of assembly, homotetramer.

The protein localises to the cytoplasm. The catalysed reaction is (S)-lactate + NAD(+) = pyruvate + NADH + H(+). The protein operates within fermentation; pyruvate fermentation to lactate; (S)-lactate from pyruvate: step 1/1. With respect to regulation, allosterically activated by fructose 1,6-bisphosphate (FBP). In terms of biological role, catalyzes the conversion of lactate to pyruvate. The sequence is that of L-lactate dehydrogenase 2 from Lactococcus lactis subsp. lactis (strain IL1403) (Streptococcus lactis).